The sequence spans 345 residues: N-acetyl-gamma-glutamyl-phosphate reductase (345 aa).

Residue C149 is part of the active site.

This sequence belongs to the NAGSA dehydrogenase family. Type 1 subfamily.

The protein localises to the cytoplasm. The catalysed reaction is N-acetyl-L-glutamate 5-semialdehyde + phosphate + NADP(+) = N-acetyl-L-glutamyl 5-phosphate + NADPH + H(+). It participates in amino-acid biosynthesis; L-arginine biosynthesis; N(2)-acetyl-L-ornithine from L-glutamate: step 3/4. Its function is as follows. Catalyzes the NADPH-dependent reduction of N-acetyl-5-glutamyl phosphate to yield N-acetyl-L-glutamate 5-semialdehyde. This is N-acetyl-gamma-glutamyl-phosphate reductase from Bacillus cytotoxicus (strain DSM 22905 / CIP 110041 / 391-98 / NVH 391-98).